The sequence spans 340 residues: Acidic endochitinase WIN6 (340 aa).

Residues 1 to 22 (MSVWALFAFFSLFLSLSVRGSA) form the signal peptide. Residues 23-63 (EQCGRQAGDALCPGGLCCSSYGWCGTTVDYCGIGCQSQCDG) enclose the Chitin-binding type-1 domain. 4 disulfide bridges follow: cysteine 25-cysteine 40, cysteine 34-cysteine 46, cysteine 39-cysteine 53, and cysteine 57-cysteine 61. Positions 64–85 (GGGGDGGDDGCDGGDDGGGDGD) are spacer. The chitinase stretch occupies residues 86 to 340 (DGYLSDIIPK…YGLSGLKDTM (255 aa)). Disulfide bonds link cysteine 110–cysteine 172, cysteine 183–cysteine 191, and cysteine 290–cysteine 323. Glutamate 154 functions as the Proton donor in the catalytic mechanism.

It belongs to the glycosyl hydrolase 19 family. Chitinase class I subfamily.

It catalyses the reaction Random endo-hydrolysis of N-acetyl-beta-D-glucosaminide (1-&gt;4)-beta-linkages in chitin and chitodextrins.. Its function is as follows. Defense against chitin-containing fungal pathogens. This chain is Acidic endochitinase WIN6 (WIN6), found in Populus trichocarpa (Western balsam poplar).